Reading from the N-terminus, the 246-residue chain is ATP synthase subunit a (246 aa).

Positions 1–3 (MFY) are cleaved as a propeptide — removed in mature form. The next 7 membrane-spanning stretches (helical) occupy residues 20-40 (ILTLALTNYTLYLIIVVSIIF), 56-76 (WGVAIIAIYDTILNLVYSQIG), 82-102 (FFPLIFTIFNLIFAANLISMI), 112-132 (LVAIVSFSLALWIGNVILGLY), 138-158 (FFALFVPSGTPLPLVPILVLI), 176-196 (ANILSGHLLMLILGSLIVNLM), and 203-223 (FIGGIVPIVAVIAITILEVGI).

Belongs to the ATPase A chain family. As to quaternary structure, F-type ATPases have 2 components, CF(1) - the catalytic core - and CF(0) - the membrane proton channel. CF(1) has five subunits: alpha(3), beta(3), gamma(1), delta(1), epsilon(1). CF(0) has three main subunits: a, b and c.

Its subcellular location is the mitochondrion inner membrane. Functionally, mitochondrial membrane ATP synthase (F(1)F(0) ATP synthase or Complex V) produces ATP from ADP in the presence of a proton gradient across the membrane which is generated by electron transport complexes of the respiratory chain. F-type ATPases consist of two structural domains, F(1) - containing the extramembraneous catalytic core and F(0) - containing the membrane proton channel, linked together by a central stalk and a peripheral stalk. During catalysis, ATP synthesis in the catalytic domain of F(1) is coupled via a rotary mechanism of the central stalk subunits to proton translocation. Key component of the proton channel; it may play a direct role in the translocation of protons across the membrane. This Candida albicans (strain SC5314 / ATCC MYA-2876) (Yeast) protein is ATP synthase subunit a (ATP6).